Reading from the N-terminus, the 364-residue chain is Bifunctional protein Rv2228c (364 aa).

Residues 1–139 form the RNase H type-1 domain; that stretch reads MKVVIEADGG…MDAAAQSAAA (139 aa). Mg(2+) is bound by residues D8, E49, D73, and D123. The Tele-phosphohistidine intermediate role is filled by H172. Catalysis depends on E246, which acts as the Proton donor/acceptor; for phosphatase activity.

It in the N-terminal section; belongs to the RNase H family. This sequence in the C-terminal section; belongs to the histidine phosphatase superfamily. As to quaternary structure, the N-terminal domain alone is monomeric in solution but associates in the crystal to form a dimer. Mg(2+) is required as a cofactor.

It catalyses the reaction Endonucleolytic cleavage to 5'-phosphomonoester.. The catalysed reaction is adenosylcob(III)alamin 5'-phosphate + H2O = adenosylcob(III)alamin + phosphate. The enzyme catalyses alpha-ribazole 5'-phosphate + H2O = alpha-ribazole + phosphate. Its pathway is nucleoside biosynthesis; alpha-ribazole biosynthesis; alpha-ribazole from 5,6-dimethylbenzimidazole: step 2/2. Functionally, endonuclease that displays both RNase H activity with a hybrid RNA/DNA substrate as well as double-stranded RNase activity. As the only authenticated RNase HI in M.tuberculosis, probably plays an important role in the physiology of this organism, being likely involved in bacterial replication. Catalyzes the hydrolysis of the phospho group from alpha-ribazole 5'-phosphate to form alpha-ribazole. May also catalyze the conversion of adenosylcobalamin 5'-phosphate to adenosylcobalamin (vitamin B12). Has a possible role in B12 recycling, but the primary role of the C-terminal domain of this phosphatase enzyme could be phosphate generation to help bacterial survival within the macrophage, which is a phosphate-deprived environment. In Mycobacterium tuberculosis (strain ATCC 25618 / H37Rv), this protein is Bifunctional protein Rv2228c.